The primary structure comprises 28 residues: Humanin-like 4 (28 aa).

It belongs to the humanin family. As to expression, highly expressed in testis. Also expressed in kidney, heart, skeletal muscles and brain.

It is found in the secreted. The protein resides in the cytoplasm. Functionally, plays a role as a neuroprotective and antiapoptotic factor. The chain is Humanin-like 4 from Homo sapiens (Human).